A 399-amino-acid chain; its full sequence is CLOCK-interacting pacemaker (399 aa).

Positions 1-12 (MERKNSSRESPR) are enriched in basic and acidic residues. Disordered regions lie at residues 1-85 (MERK…AKNA) and 159-224 (SYTK…KLAE). Ser-213 is modified (phosphoserine). Residues 333–359 (TLKTKELIRQNQATQVELDQLKEQTQL) are a coiled coil. The span at 378–388 (SLTPGSSNTGS) shows a compositional bias: polar residues. Residues 378–399 (SLTPGSSNTGSDLEAFSDHPDI) form a disordered region.

In terms of assembly, interacts with CLOCK. Forms a ternary complex with the CLOCK-BMAL1 heterodimer. Interacts with CAD and HSPA5.

It is found in the nucleus. The protein localises to the cytoplasm. It localises to the cytosol. Transcriptional repressor which may act as a negative-feedback regulator of CLOCK-BMAL1 transcriptional activity in the circadian-clock mechanism. May stimulate BMAL1-dependent phosphorylation of CLOCK. However, the physiological relevance of these observations is unsure, since experiments in knockout mice showed that CIPC is not critially required for basic circadian clock. The sequence is that of CLOCK-interacting pacemaker (CIPC) from Pongo abelii (Sumatran orangutan).